The primary structure comprises 294 residues: Probable endonuclease 4 (294 aa).

Zn(2+) contacts are provided by His78, His118, Glu155, Asp189, His192, His226, Asp239, His241, and Glu271.

This sequence belongs to the AP endonuclease 2 family. It depends on Zn(2+) as a cofactor.

It carries out the reaction Endonucleolytic cleavage to 5'-phosphooligonucleotide end-products.. In terms of biological role, endonuclease IV plays a role in DNA repair. It cleaves phosphodiester bonds at apurinic or apyrimidinic (AP) sites, generating a 3'-hydroxyl group and a 5'-terminal sugar phosphate. The sequence is that of Probable endonuclease 4 from Oleidesulfovibrio alaskensis (strain ATCC BAA-1058 / DSM 17464 / G20) (Desulfovibrio alaskensis).